A 251-amino-acid polypeptide reads, in one-letter code: Imidazole glycerol phosphate synthase subunit HisF (251 aa).

Active-site residues include Asp11 and Asp130.

Belongs to the HisA/HisF family. In terms of assembly, heterodimer of HisH and HisF.

Its subcellular location is the cytoplasm. It carries out the reaction 5-[(5-phospho-1-deoxy-D-ribulos-1-ylimino)methylamino]-1-(5-phospho-beta-D-ribosyl)imidazole-4-carboxamide + L-glutamine = D-erythro-1-(imidazol-4-yl)glycerol 3-phosphate + 5-amino-1-(5-phospho-beta-D-ribosyl)imidazole-4-carboxamide + L-glutamate + H(+). Its pathway is amino-acid biosynthesis; L-histidine biosynthesis; L-histidine from 5-phospho-alpha-D-ribose 1-diphosphate: step 5/9. In terms of biological role, IGPS catalyzes the conversion of PRFAR and glutamine to IGP, AICAR and glutamate. The HisF subunit catalyzes the cyclization activity that produces IGP and AICAR from PRFAR using the ammonia provided by the HisH subunit. The sequence is that of Imidazole glycerol phosphate synthase subunit HisF from Bacteroides thetaiotaomicron (strain ATCC 29148 / DSM 2079 / JCM 5827 / CCUG 10774 / NCTC 10582 / VPI-5482 / E50).